A 171-amino-acid polypeptide reads, in one-letter code: Shikimate kinase (171 aa).

Position 14–19 (14–19 (GAGKST)) interacts with ATP. Ser-18 serves as a coordination point for Mg(2+). Residues Asp-36, Arg-60, and Gly-82 each contribute to the substrate site. Arg-120 serves as a coordination point for ATP. Arg-139 is a substrate binding site. Gln-156 is a binding site for ATP.

It belongs to the shikimate kinase family. As to quaternary structure, monomer. Mg(2+) is required as a cofactor.

It localises to the cytoplasm. The catalysed reaction is shikimate + ATP = 3-phosphoshikimate + ADP + H(+). The protein operates within metabolic intermediate biosynthesis; chorismate biosynthesis; chorismate from D-erythrose 4-phosphate and phosphoenolpyruvate: step 5/7. Catalyzes the specific phosphorylation of the 3-hydroxyl group of shikimic acid using ATP as a cosubstrate. This is Shikimate kinase from Shewanella woodyi (strain ATCC 51908 / MS32).